The following is a 105-amino-acid chain: Large ribosomal subunit protein uL23 (105 aa).

It belongs to the universal ribosomal protein uL23 family. Part of the 50S ribosomal subunit. Contacts protein L29, and trigger factor when it is bound to the ribosome.

Its function is as follows. One of the early assembly proteins it binds 23S rRNA. One of the proteins that surrounds the polypeptide exit tunnel on the outside of the ribosome. Forms the main docking site for trigger factor binding to the ribosome. This chain is Large ribosomal subunit protein uL23, found in Ureaplasma parvum serovar 3 (strain ATCC 27815 / 27 / NCTC 11736).